The sequence spans 136 residues: Fatty acid-binding protein homolog 5 (136 aa).

A fatty acid-binding positions include R111 and 131–133 (RAY).

The protein belongs to the calycin superfamily. Fatty-acid binding protein (FABP) family.

The protein is Fatty acid-binding protein homolog 5 (lbp-5) of Caenorhabditis elegans.